Consider the following 158-residue polypeptide: Lipoprotein signal peptidase (158 aa).

Transmembrane regions (helical) follow at residues 7–27, 38–58, 68–88, and 92–112; these read LFWIAAFIAFFLDQITKYWVV, LLTGIFHFTYVTNTGAAFSLL, LSLGVSLVLIALALFGPTLNL, and LGYGLILGGAMGNGIDRFVLG. Active-site residues include Asp-116 and Asp-132. A helical transmembrane segment spans residues 125–145; it reads FPVFNVADSFISIGIVFLLIA.

This sequence belongs to the peptidase A8 family.

The protein resides in the cell inner membrane. The enzyme catalyses Release of signal peptides from bacterial membrane prolipoproteins. Hydrolyzes -Xaa-Yaa-Zaa-|-(S,diacylglyceryl)Cys-, in which Xaa is hydrophobic (preferably Leu), and Yaa (Ala or Ser) and Zaa (Gly or Ala) have small, neutral side chains.. Its pathway is protein modification; lipoprotein biosynthesis (signal peptide cleavage). In terms of biological role, this protein specifically catalyzes the removal of signal peptides from prolipoproteins. This is Lipoprotein signal peptidase from Nostoc punctiforme (strain ATCC 29133 / PCC 73102).